A 610-amino-acid chain; its full sequence is Protein mono-ADP-ribosyltransferase PARP6 (610 aa).

Residues 374–600 (EMTQGSYLEI…QDPKIQKEIM (227 aa)) form the PARP catalytic domain. An ADP-ribosyl aspartic acid modification is found at Asp-580.

It belongs to the ARTD/PARP family. Auto-mono-ADP-ribosylated.

The catalysed reaction is L-aspartyl-[protein] + NAD(+) = 4-O-(ADP-D-ribosyl)-L-aspartyl-[protein] + nicotinamide. It carries out the reaction L-cysteinyl-[protein] + NAD(+) = S-(ADP-D-ribosyl)-L-cysteinyl-[protein] + nicotinamide + H(+). Its function is as follows. Mono-ADP-ribosyltransferase that mediates mono-ADP-ribosylation of target proteins. The polypeptide is Protein mono-ADP-ribosyltransferase PARP6 (Pongo abelii (Sumatran orangutan)).